Consider the following 236-residue polypeptide: tRNA (guanine-N(1)-)-methyltransferase (236 aa).

Residues Gly114 and 134–139 (IGDYIL) each bind S-adenosyl-L-methionine.

It belongs to the RNA methyltransferase TrmD family. Homodimer.

It localises to the cytoplasm. The enzyme catalyses guanosine(37) in tRNA + S-adenosyl-L-methionine = N(1)-methylguanosine(37) in tRNA + S-adenosyl-L-homocysteine + H(+). Its function is as follows. Specifically methylates guanosine-37 in various tRNAs. In Wolbachia pipientis wMel, this protein is tRNA (guanine-N(1)-)-methyltransferase.